Here is a 272-residue protein sequence, read N- to C-terminus: tRNA pseudouridine synthase A (272 aa).

Catalysis depends on Asp52, which acts as the Nucleophile. Tyr110 lines the substrate pocket.

This sequence belongs to the tRNA pseudouridine synthase TruA family. Homodimer.

The enzyme catalyses uridine(38/39/40) in tRNA = pseudouridine(38/39/40) in tRNA. Formation of pseudouridine at positions 38, 39 and 40 in the anticodon stem and loop of transfer RNAs. The sequence is that of tRNA pseudouridine synthase A from Cupriavidus taiwanensis (strain DSM 17343 / BCRC 17206 / CCUG 44338 / CIP 107171 / LMG 19424 / R1) (Ralstonia taiwanensis (strain LMG 19424)).